A 492-amino-acid polypeptide reads, in one-letter code: Transmembrane protein 39B (492 aa).

The segment at 1–53 (MGGRRGPNRTSYYRNPLCEPGSSGASGGGHSSSASVSSVRSRSRTTSGTGLSS) is disordered. Residue Asn-8 is glycosylated (N-linked (GlcNAc...) asparagine). The segment covering 31–53 (SSSASVSSVRSRSRTTSGTGLSS) has biased composition (low complexity). 8 consecutive transmembrane segments (helical) span residues 77–97 (SILF…VHYI), 115–135 (TSLN…IVLG), 153–175 (SLFR…GWSL), 185–205 (TYSF…IPFL), 288–308 (EVLV…VWFV), 322–342 (LFLL…LPAS), 421–441 (ILNI…YSLM), and 447–467 (HQTI…FKLL).

This sequence belongs to the TMEM39 family.

Its subcellular location is the endoplasmic reticulum membrane. Functionally, may protect the cells against DNA damage caused by exposure to the cold-warming stress and facilitates tissue damage repair during the recovery phase. The chain is Transmembrane protein 39B from Mus musculus (Mouse).